The sequence spans 3564 residues: Sushi, von Willebrand factor type A, EGF and pentraxin domain-containing protein 1 (3564 aa).

The N-terminal stretch at 1–17 (MWTRLAFCCWALALVSG) is a signal peptide. A VWFA domain is found at 84-265 (ELVFLVDESS…LARRALHEDL (182 aa)). Asparagine 187 carries an N-linked (GlcNAc...) asparagine glycan. Sushi domains lie at 377 to 436 (VHCP…FCRV), 437 to 496 (RTCP…RCVE), and 497 to 561 (RHCA…VCKD). Intrachain disulfides connect cysteine 379–cysteine 421, cysteine 407–cysteine 434, cysteine 439–cysteine 481, cysteine 467–cysteine 494, cysteine 499–cysteine 544, and cysteine 530–cysteine 559. HYR domains lie at 560–644 (KDVE…KVID) and 645–724 (VEPP…VIKG). Residues 725-789 (SPCEVPFTPV…YSTEWPDCAI (65 aa)) form the Sushi 4 domain. Disulfide bonds link cysteine 727–cysteine 769, cysteine 753–cysteine 787, cysteine 1192–cysteine 1203, cysteine 1197–cysteine 1212, cysteine 1214–cysteine 1223, cysteine 1230–cysteine 1241, cysteine 1235–cysteine 1250, cysteine 1252–cysteine 1261, cysteine 1268–cysteine 1279, cysteine 1273–cysteine 1288, cysteine 1290–cysteine 1299, cysteine 1306–cysteine 1317, cysteine 1311–cysteine 1326, cysteine 1328–cysteine 1337, cysteine 1344–cysteine 1355, cysteine 1349–cysteine 1364, cysteine 1366–cysteine 1375, cysteine 1382–cysteine 1393, cysteine 1387–cysteine 1402, and cysteine 1404–cysteine 1413. Residues 1188-1224 (VFHECFLNPCHNSGTCQQLGRGYVCLCPPGYTGLKCE) form the EGF-like 1 domain. The 37-residue stretch at 1226–1262 (DIDECSSLPCLNGGICRDKVGGFTCECSSGYTGQICE) folds into the EGF-like 2; calcium-binding domain. In terms of domain architecture, EGF-like 3; calcium-binding spans 1264 to 1300 (NINECSSSPCLNKGTCTDGLASYRCTCVSGYVGVHCE). The 37-residue stretch at 1302 to 1338 (DVNECQSSPCLNNAVCKDQVGGFSCKCPPGFLGTRCE) folds into the EGF-like 4; calcium-binding domain. One can recognise an EGF-like 5; calcium-binding domain in the interval 1340 to 1376 (NVDECLSQPCQNGATCKDGANSFRCQCPAGFTGPHCE). The EGF-like 6; calcium-binding domain occupies 1378-1414 (NINECQSNPCRNQATCVDELNSYSCKCRPGFSGRRCE). In terms of domain architecture, Pentraxin (PTX) spans 1419–1623 (SGFNLDFEVS…VKVDSSSIFC (205 aa)). Sushi domains are found at residues 1624–1682 (SDCP…HCER) and 1683–1740 (IRCG…SCLD). Cystine bridges form between cysteine 1626–cysteine 1667, cysteine 1653–cysteine 1680, cysteine 1685–cysteine 1725, cysteine 1711–cysteine 1738, cysteine 1744–cysteine 1756, cysteine 1750–cysteine 1765, cysteine 1767–cysteine 1778, cysteine 1784–cysteine 1824, cysteine 1810–cysteine 1837, cysteine 1842–cysteine 1882, cysteine 1868–cysteine 1895, cysteine 1900–cysteine 1940, cysteine 1926–cysteine 1953, cysteine 1958–cysteine 1998, cysteine 1984–cysteine 2011, cysteine 2016–cysteine 2056, cysteine 2042–cysteine 2073, cysteine 2078–cysteine 2121, cysteine 2107–cysteine 2136, cysteine 2141–cysteine 2181, cysteine 2167–cysteine 2194, cysteine 2199–cysteine 2240, cysteine 2226–cysteine 2254, cysteine 2259–cysteine 2299, cysteine 2285–cysteine 2313, cysteine 2318–cysteine 2358, cysteine 2344–cysteine 2371, cysteine 2376–cysteine 2417, cysteine 2403–cysteine 2430, cysteine 2435–cysteine 2475, cysteine 2461–cysteine 2488, cysteine 2493–cysteine 2533, cysteine 2519–cysteine 2546, cysteine 2551–cysteine 2591, and cysteine 2577–cysteine 2603. The EGF-like 7; calcium-binding domain occupies 1740 to 1779 (DVDECAVGSDCSEHASCLNTNGSYICSCKPPYTGDGKNCA). Asparagine 1760 carries an N-linked (GlcNAc...) asparagine glycan. Sushi domains lie at 1776–1839 (KNCA…SCEA), 1840–1897 (ISCG…VCEL), 1898–1955 (VKCS…SCQL), 1956–2013 (VSCG…QCLA), 2014–2075 (VSCD…RCIA), 2076–2138 (HFCE…QCIP), 2139–2196 (VRCG…TCHP), 2197–2256 (VSCN…SCTP), 2257–2315 (LNCG…KCVP), 2316–2373 (TKCA…VCKL), 2374–2432 (VLCQ…ECVP), 2433–2490 (VECP…MCRP), 2491–2548 (IECP…SCNA), and 2549–2605 (IHCS…TCVP). The tract at residues 2634–2641 (DMMEVPYL) is important for the interaction with integrin ITGA9:ITGB1. Sushi domains follow at residues 2659-2708 (EESL…SCIS), 2709-2766 (IECD…RCEV), 2767-2824 (ISCS…VCLP), 2825-2882 (VDCG…SCVP), 2883-2940 (VRCP…ICKP), 2941-2998 (ATCG…SCLP), 2999-3054 (CTCS…LCEH), 3055-3112 (ADCG…TCEP), 3113-3171 (VSCG…NCSP), 3172-3231 (KTCP…SCIP), 3232-3289 (VVCG…VCRE), 3290-3347 (SRCE…LCKP), 3348-3406 (NPCP…RCEK), and 3407-3463 (ISCG…ICRA). Disulfide bonds link cysteine 2679-cysteine 2706, cysteine 2711-cysteine 2751, cysteine 2737-cysteine 2764, cysteine 2769-cysteine 2809, cysteine 2795-cysteine 2822, cysteine 2827-cysteine 2867, cysteine 2853-cysteine 2880, cysteine 2885-cysteine 2925, cysteine 2911-cysteine 2938, cysteine 2943-cysteine 2983, cysteine 2969-cysteine 2996, cysteine 3001-cysteine 3040, cysteine 3026-cysteine 3052, cysteine 3057-cysteine 3097, cysteine 3083-cysteine 3110, cysteine 3115-cysteine 3156, cysteine 3141-cysteine 3169, cysteine 3174-cysteine 3214, cysteine 3200-cysteine 3229, cysteine 3234-cysteine 3274, cysteine 3260-cysteine 3287, cysteine 3292-cysteine 3332, cysteine 3318-cysteine 3345, cysteine 3350-cysteine 3391, cysteine 3377-cysteine 3404, cysteine 3409-cysteine 3449, cysteine 3435-cysteine 3461, cysteine 3497-cysteine 3507, cysteine 3501-cysteine 3513, cysteine 3515-cysteine 3524, cysteine 3529-cysteine 3539, cysteine 3533-cysteine 3545, and cysteine 3547-cysteine 3556. 2 EGF-like domains span residues 3493–3525 (EEPI…SRCH) and 3526–3557 (TATC…HDCS).

Interacts (via Sushi domain 21) with ITGA9:ITGB1; thereby inhibits Ca(2+) intracellular signaling and as a result represses vasocontraction. Interacts (via Sushi domain 21) with ITGA4:ITGB1; thereby inhibits Ca(2+) intracellular signaling and as a result represses vasocontraction. Interacts with ANGPT1 and ANGPT2. Interacts with PEAR1 (via extracellular domain). Interacts with HSPG2, TLN1, FN1, COPA, CCT2, IQGAP1, LAMC1 and NID1. Interacts (via C-terminus) with TIE1.

The protein localises to the secreted. It localises to the nucleus. Its subcellular location is the cytoplasm. It is found in the membrane. Its function is as follows. Required for morphological development, cell alignment and migration of lymphatic endothelial cells during embryonic development, potentially via modulation of ANGPT2-TIE1 signaling and subsequent activation of FOXC2 transcription. Required for embryonic lymphatic vascular development, via mediating the correct formation of the first lymphovenous contact site and tight association of the lymphatic endothelium with the venous endothelium. Represses PRKCA-mediated L-type voltage-gated channel Ca(2+) influx and ROCK-mediated calcium sensitivity in vascular smooth muscle cells, via its interaction with integrins, thereby inhibiting vasocontraction. Promotes platelet activation, via its interaction with PEAR1 and subsequent activation of AKT/mTOR signaling. Plays a role in epidermal development and keratinocyte differentiation, independent of cell-cell adhesion. May play a role in initial cell attachment of stromal osteogenic cells. May promote myoblast cell adhesion when in the presence of integrin ITGA9:ITGB1. This is Sushi, von Willebrand factor type A, EGF and pentraxin domain-containing protein 1 (Svep1) from Rattus norvegicus (Rat).